Here is a 975-residue protein sequence, read N- to C-terminus: Glycine dehydrogenase (decarboxylating) (975 aa).

An N6-(pyridoxal phosphate)lysine modification is found at Lys723.

It belongs to the GcvP family. In terms of assembly, the glycine cleavage system is composed of four proteins: P, T, L and H. Pyridoxal 5'-phosphate serves as cofactor.

It carries out the reaction N(6)-[(R)-lipoyl]-L-lysyl-[glycine-cleavage complex H protein] + glycine + H(+) = N(6)-[(R)-S(8)-aminomethyldihydrolipoyl]-L-lysyl-[glycine-cleavage complex H protein] + CO2. Its function is as follows. The glycine cleavage system catalyzes the degradation of glycine. The P protein binds the alpha-amino group of glycine through its pyridoxal phosphate cofactor; CO(2) is released and the remaining methylamine moiety is then transferred to the lipoamide cofactor of the H protein. In Burkholderia orbicola (strain MC0-3), this protein is Glycine dehydrogenase (decarboxylating).